A 190-amino-acid chain; its full sequence is 7-methyl-GTP pyrophosphatase (190 aa).

The active-site Proton acceptor is D69.

It belongs to the Maf family. YceF subfamily. A divalent metal cation is required as a cofactor.

The protein resides in the cytoplasm. It carries out the reaction N(7)-methyl-GTP + H2O = N(7)-methyl-GMP + diphosphate + H(+). Nucleoside triphosphate pyrophosphatase that hydrolyzes 7-methyl-GTP (m(7)GTP). May have a dual role in cell division arrest and in preventing the incorporation of modified nucleotides into cellular nucleic acids. This Xanthomonas oryzae pv. oryzae (strain MAFF 311018) protein is 7-methyl-GTP pyrophosphatase.